The sequence spans 396 residues: Ribosomal RNA large subunit methyltransferase I (396 aa).

Positions 2–81 (TVRLILAKGR…EVIDCAFFIR (80 aa)) constitute a PUA domain.

The protein belongs to the methyltransferase superfamily. RlmI family.

The protein localises to the cytoplasm. It catalyses the reaction cytidine(1962) in 23S rRNA + S-adenosyl-L-methionine = 5-methylcytidine(1962) in 23S rRNA + S-adenosyl-L-homocysteine + H(+). Its function is as follows. Specifically methylates the cytosine at position 1962 (m5C1962) of 23S rRNA. The chain is Ribosomal RNA large subunit methyltransferase I from Yersinia pseudotuberculosis serotype O:1b (strain IP 31758).